A 60-amino-acid polypeptide reads, in one-letter code: UPF0434 protein PC1_1771 (60 aa).

The protein belongs to the UPF0434 family.

The polypeptide is UPF0434 protein PC1_1771 (Pectobacterium carotovorum subsp. carotovorum (strain PC1)).